The sequence spans 100 residues: Cytochrome b (100 aa).

A run of 3 helical transmembrane segments spans residues M1 to M21, W45 to I66, and W81 to V100. Heme b-binding residues include H51 and H65.

The protein belongs to the cytochrome b family. As to quaternary structure, the cytochrome bc1 complex contains 3 respiratory subunits (MT-CYB, CYC1 and UQCRFS1), 2 core proteins (UQCRC1 and UQCRC2) and probably 6 low-molecular weight proteins. It depends on heme b as a cofactor.

The protein localises to the mitochondrion inner membrane. Component of the ubiquinol-cytochrome c reductase complex (complex III or cytochrome b-c1 complex) that is part of the mitochondrial respiratory chain. The b-c1 complex mediates electron transfer from ubiquinol to cytochrome c. Contributes to the generation of a proton gradient across the mitochondrial membrane that is then used for ATP synthesis. In Polypterus sp. (Bichir), this protein is Cytochrome b (mt-cyb).